The following is a 202-amino-acid chain: Adenylyl-sulfate kinase (202 aa).

35-42 (GLSGSGKS) is a binding site for ATP. The Phosphoserine intermediate role is filled by Ser-109.

It belongs to the APS kinase family.

It catalyses the reaction adenosine 5'-phosphosulfate + ATP = 3'-phosphoadenylyl sulfate + ADP + H(+). It participates in sulfur metabolism; hydrogen sulfide biosynthesis; sulfite from sulfate: step 2/3. Its function is as follows. Catalyzes the synthesis of activated sulfate. This Bacteroides fragilis (strain ATCC 25285 / DSM 2151 / CCUG 4856 / JCM 11019 / LMG 10263 / NCTC 9343 / Onslow / VPI 2553 / EN-2) protein is Adenylyl-sulfate kinase.